We begin with the raw amino-acid sequence, 99 residues long: NADH-ubiquinone oxidoreductase chain 4L (99 aa).

3 helical membrane passes run 5–25 (IITA…GFII), 30–50 (ILLL…IIIC), and 65–85 (LYIL…LVLF).

The protein belongs to the complex I subunit 4L family.

The protein localises to the mitochondrion membrane. It carries out the reaction a ubiquinone + NADH + 5 H(+)(in) = a ubiquinol + NAD(+) + 4 H(+)(out). Its function is as follows. Core subunit of the mitochondrial membrane respiratory chain NADH dehydrogenase (Complex I) that is believed to belong to the minimal assembly required for catalysis. Complex I functions in the transfer of electrons from NADH to the respiratory chain. The immediate electron acceptor for the enzyme is believed to be ubiquinone. The protein is NADH-ubiquinone oxidoreductase chain 4L (ND4L) of Allomyces macrogynus.